Reading from the N-terminus, the 423-residue chain is Histidinol dehydrogenase (423 aa).

Residues tyrosine 116, glutamine 177, and asparagine 200 each coordinate NAD(+). Residues serine 223, glutamine 245, and histidine 248 each contribute to the substrate site. Residues glutamine 245 and histidine 248 each coordinate Zn(2+). Residues glutamate 313 and histidine 314 each act as proton acceptor in the active site. Histidine 314, aspartate 347, glutamate 401, and histidine 406 together coordinate substrate. A Zn(2+)-binding site is contributed by aspartate 347. Histidine 406 provides a ligand contact to Zn(2+).

This sequence belongs to the histidinol dehydrogenase family. It depends on Zn(2+) as a cofactor.

The enzyme catalyses L-histidinol + 2 NAD(+) + H2O = L-histidine + 2 NADH + 3 H(+). It participates in amino-acid biosynthesis; L-histidine biosynthesis; L-histidine from 5-phospho-alpha-D-ribose 1-diphosphate: step 9/9. In terms of biological role, catalyzes the sequential NAD-dependent oxidations of L-histidinol to L-histidinaldehyde and then to L-histidine. The protein is Histidinol dehydrogenase of Staphylococcus saprophyticus subsp. saprophyticus (strain ATCC 15305 / DSM 20229 / NCIMB 8711 / NCTC 7292 / S-41).